The chain runs to 504 residues: Maturase K (504 aa).

Belongs to the intron maturase 2 family. MatK subfamily.

It is found in the plastid. The protein resides in the chloroplast. In terms of biological role, usually encoded in the trnK tRNA gene intron. Probably assists in splicing its own and other chloroplast group II introns. The chain is Maturase K from Eichhornia crassipes (Water hyacinth).